Consider the following 220-residue polypeptide: Putative respiratory nitrate reductase subunit Rieske (220 aa).

The Rieske domain maps to 118-206 (KAPTLLVRHA…ITVSSEGYLI (89 aa)). [2Fe-2S] cluster is bound by residues Cys-151, His-153, Cys-168, and His-171. Cys-156 and Cys-170 form a disulfide bridge.

As to quaternary structure, probable multiprotein complex; a catalytic heterodimer of an alpha and beta chain is proposed to associate with additional subunits involved in membrane attachment and electron transfer. [2Fe-2S] cluster serves as cofactor.

The protein localises to the cell membrane. In terms of biological role, the respiratory membrane-bound nitrate reductase enzyme complex plays a role in generation of metabolic energy by using nitrate as a terminal electron acceptor during anaerobic conditions. Proposed Rieske subunit involved in a protonmotive Q-cycle mechanism-based electron transfer electrons to the beta subunit. This is Putative respiratory nitrate reductase subunit Rieske (narB) from Haloferax mediterranei (strain ATCC 33500 / DSM 1411 / JCM 8866 / NBRC 14739 / NCIMB 2177 / R-4) (Halobacterium mediterranei).